A 222-amino-acid polypeptide reads, in one-letter code: Dihydrophenazinedicarboxylate synthase (222 aa).

Ser18 serves as a coordination point for substrate. FMN contacts are provided by residues 73–76 (RIVV) and 88–89 (ST). Residue His90 coordinates substrate. FMN-binding positions include 94–95 (QK) and Gln117. Substrate contacts are provided by Arg139 and Ser147. Residues 152-153 (QS) and Arg205 each bind FMN.

The protein belongs to the pyridoxamine 5'-phosphate oxidase family. It depends on FMN as a cofactor.

The enzyme catalyses (1R,6R)-1,4,5,5a,6,9-hexahydrophenazine-1,6-dicarboxylate + O2 = (1R,10aS)-1,4,10,10a-tetrahydrophenazine-1,6-dicarboxylate + H2O2. It carries out the reaction (1R,10aS)-1,4,10,10a-tetrahydrophenazine-1,6-dicarboxylate + O2 = (5aS)-5,5a-dihydrophenazine-1,6-dicarboxylate + H2O2. It catalyses the reaction (1R,10aS)-1,4,10,10a-tetrahydrophenazine-1-carboxylate + O2 = (10aS)-10,10a-dihydrophenazine-1-carboxylate + H2O2. The catalysed reaction is (1R)-1,4,5,10-tetrahydrophenazine-1-carboxylate + O2 = (10aS)-10,10a-dihydrophenazine-1-carboxylate + H2O2. The protein operates within antibiotic biosynthesis; phenazine biosynthesis. In terms of biological role, involved in the biosynthesis of the antibiotic phenazine, a nitrogen-containing heterocyclic molecule having important roles in virulence, competition and biological control. Catalyzes several oxidations in the terminal steps of core phenazine biosynthesis. It oxidizes both hexahydrophenazine-1,6-dicarboxylic acid (HHPDC) and tetrahydrophenazine-1-carboxylic acid (THPCA) and thereby contributes to the generation of both phenazine-1,6-dicarboxylic acid (PDC) and phenazine-1-carboxylic acid (PCA). The sequence is that of Dihydrophenazinedicarboxylate synthase from Pseudomonas chlororaphis (Pseudomonas aureofaciens).